Reading from the N-terminus, the 101-residue chain is Small ribosomal subunit protein bS18c (101 aa).

Positions 1 to 19 (MDKSKQPFRKSKRSFRRRL) are enriched in basic residues. A disordered region spans residues 1-24 (MDKSKQPFRKSKRSFRRRLPPIGS).

The protein belongs to the bacterial ribosomal protein bS18 family. In terms of assembly, part of the 30S ribosomal subunit.

The protein localises to the plastid. It is found in the chloroplast. This Amborella trichopoda protein is Small ribosomal subunit protein bS18c.